The chain runs to 696 residues: Polyribonucleotide nucleotidyltransferase (696 aa).

Residues Asp489 and Asp495 each coordinate Mg(2+). The 60-residue stretch at 556-615 folds into the KH domain; it reads PQYVTMKINPEKIRDVIGKGGVVIREITEATNCAIDISDDGTIKIAAHTTEEGEAAKRRI. Positions 625 to 693 constitute an S1 motif domain; sequence GKVYEGTVVK…RQGRVRLSMK (69 aa).

It belongs to the polyribonucleotide nucleotidyltransferase family. As to quaternary structure, component of the RNA degradosome, which is a multiprotein complex involved in RNA processing and mRNA degradation. Mg(2+) serves as cofactor.

It localises to the cytoplasm. It carries out the reaction RNA(n+1) + phosphate = RNA(n) + a ribonucleoside 5'-diphosphate. Functionally, involved in mRNA degradation. Catalyzes the phosphorolysis of single-stranded polyribonucleotides processively in the 3'- to 5'-direction. This Coxiella burnetii (strain CbuG_Q212) (Coxiella burnetii (strain Q212)) protein is Polyribonucleotide nucleotidyltransferase.